Here is a 181-residue protein sequence, read N- to C-terminus: NAD(P)H-quinone oxidoreductase subunit I, chloroplastic (181 aa).

2 4Fe-4S ferredoxin-type domains span residues 55-84 (GRIH…VDWE) and 95-124 (KSYS…MTEE). 8 residues coordinate [4Fe-4S] cluster: cysteine 64, cysteine 67, cysteine 70, cysteine 74, cysteine 104, cysteine 107, cysteine 110, and cysteine 114.

Belongs to the complex I 23 kDa subunit family. As to quaternary structure, NDH is composed of at least 16 different subunits, 5 of which are encoded in the nucleus. It depends on [4Fe-4S] cluster as a cofactor.

It is found in the plastid. Its subcellular location is the chloroplast thylakoid membrane. It catalyses the reaction a plastoquinone + NADH + (n+1) H(+)(in) = a plastoquinol + NAD(+) + n H(+)(out). The enzyme catalyses a plastoquinone + NADPH + (n+1) H(+)(in) = a plastoquinol + NADP(+) + n H(+)(out). NDH shuttles electrons from NAD(P)H:plastoquinone, via FMN and iron-sulfur (Fe-S) centers, to quinones in the photosynthetic chain and possibly in a chloroplast respiratory chain. The immediate electron acceptor for the enzyme in this species is believed to be plastoquinone. Couples the redox reaction to proton translocation, and thus conserves the redox energy in a proton gradient. The sequence is that of NAD(P)H-quinone oxidoreductase subunit I, chloroplastic from Physcomitrium patens (Spreading-leaved earth moss).